A 271-amino-acid polypeptide reads, in one-letter code: 4-diphosphocytidyl-2-C-methyl-D-erythritol kinase (271 aa).

Residue K8 is part of the active site. Position 90–100 (90–100 (PFGAGLGGGSA)) interacts with ATP. The active site involves D132.

Belongs to the GHMP kinase family. IspE subfamily.

It carries out the reaction 4-CDP-2-C-methyl-D-erythritol + ATP = 4-CDP-2-C-methyl-D-erythritol 2-phosphate + ADP + H(+). Its pathway is isoprenoid biosynthesis; isopentenyl diphosphate biosynthesis via DXP pathway; isopentenyl diphosphate from 1-deoxy-D-xylulose 5-phosphate: step 3/6. Catalyzes the phosphorylation of the position 2 hydroxy group of 4-diphosphocytidyl-2C-methyl-D-erythritol. This chain is 4-diphosphocytidyl-2-C-methyl-D-erythritol kinase, found in Parabacteroides distasonis (strain ATCC 8503 / DSM 20701 / CIP 104284 / JCM 5825 / NCTC 11152).